A 196-amino-acid polypeptide reads, in one-letter code: Putative HTH-type transcriptional regulator protein PtxE (196 aa).

In terms of domain architecture, HTH lysR-type spans 1–59 (MLNPVWLKSLVAIVQTGSFQSAARALGLAQPTVSQHLQKLEEQVGVTLVQRSRSGCQPT). Residues 19-38 (FQSAARALGLAQPTVSQHLQ) constitute a DNA-binding region (H-T-H motif).

Belongs to the LysR transcriptional regulatory family.

The chain is Putative HTH-type transcriptional regulator protein PtxE (ptxE) from Stutzerimonas stutzeri (Pseudomonas stutzeri).